Reading from the N-terminus, the 368-residue chain is Ribulose bisphosphate carboxylase-like protein 1 (368 aa).

This sequence belongs to the RuBisCO large chain family. Type IV subfamily.

In terms of biological role, unknown. Probably does not have RuBisCO activity. In Rhodopseudomonas palustris (strain ATCC BAA-98 / CGA009), this protein is Ribulose bisphosphate carboxylase-like protein 1 (rlp1).